We begin with the raw amino-acid sequence, 426 residues long: DNA polymerase processivity factor component OPG148 (426 aa).

Belongs to the orthopoxvirus OPG148 family. Interacts with the DNA polymerase catalytic subunit OPG071. Interacts with UDG/OPG116. Component of the uracil-DNA glycosylase(UDG)-OPG148-polymerase complex; OPG148 and UDG form a heterodimeric processivity factor that associates with OPG071 to form the processive polymerase holoenzyme. Interacts with OPG117.

Its function is as follows. Plays an essential role in viral DNA replication by acting as the polymerase processivity factor together with protein OPG116. Serves as a bridge which links the DNA polymerase OPG071 and the uracil DNA glycosylase. In Vaccinia virus (strain Copenhagen) (VACV), this protein is DNA polymerase processivity factor component OPG148 (OPG148).